The sequence spans 227 residues: MPDMTMKSQPDRLYGRQRGHALRPRQQRLLDLTLPRLRYAGPSSLRGVSPLWLEIGFGGGEHAVAQIEAHPDVTLIACEVFENGLCSLLSRLLPEPLDEETAPLPGNLRVWDDDARPLLRDLPDQVLDRVFLMFPDPWPKARHAKRRFVHPENAATLARVMKPGAEWRIASDDPTYQAWVPEVMERQTAFELLAVSNERPEGWPPTRYEAKAIRAGRQPLYWRYVRR.

A disordered region spans residues 1 to 21 (MPDMTMKSQPDRLYGRQRGHA). Positions 54, 79, 114, and 136 each coordinate S-adenosyl-L-methionine. The active site involves D136. Residues K140, D172, and 206-209 (TRYE) contribute to the substrate site.

The protein belongs to the class I-like SAM-binding methyltransferase superfamily. TrmB family.

It carries out the reaction guanosine(46) in tRNA + S-adenosyl-L-methionine = N(7)-methylguanosine(46) in tRNA + S-adenosyl-L-homocysteine. The protein operates within tRNA modification; N(7)-methylguanine-tRNA biosynthesis. Its function is as follows. Catalyzes the formation of N(7)-methylguanine at position 46 (m7G46) in tRNA. This is tRNA (guanine-N(7)-)-methyltransferase from Granulibacter bethesdensis (strain ATCC BAA-1260 / CGDNIH1).